The chain runs to 408 residues: Pleckstrin homology domain-containing family O member 1 (408 aa).

The tract at residues 1–21 is disordered; the sequence is MKKSGSGKRGPPDGNHQSAAP. Residues 20–131 form the PH domain; it reads APEKVGWVRK…WINALSSAIT (112 aa). An interaction with capping proteins (CPs) region spans residues 132-192; it reads RAKNRILDEV…MLTLDLIQEE (61 aa). The interval 135 to 307 is interaction with ATM, CKIP, IFP35 and NMI; that stretch reads NRILDEVTVE…PAQPGQLSRI (173 aa). Residues 217–264 form a disordered region; sequence LAGSRRRADSDRIQPSSQRASSLSRPWEKPDKGAPYTPQALKKFPSTE. The residue at position 226 (S226) is a Phosphoserine. Polar residues predominate over residues 229 to 240; it reads IQPSSQRASSLS. S270 and S341 each carry phosphoserine. A negative regulator of AP-1 activity region spans residues 307 to 408; that stretch reads IQDLVARKLE…QHSQYRKSLM (102 aa). Disordered regions lie at residues 325 to 348 and 389 to 408; these read VQGL…SESE and TPDS…KSLM. Polar residues predominate over residues 389–401; that stretch reads TPDSHLRQTSQHS.

In terms of assembly, heterodimer or homodimer. Interacts with CK2 and actin capping subunits (capping protein CP-alpha and CP-beta). CKIP1 and CK2 together inhibit the activity of actin capping protein at the barbed ends of actin filaments. Interacts with ATM, IFP35, JUN, JUND, NMI and PI3K. Interacts with AKT1, AKT2 and AKT3 (each isozyme of PKB), PtdIns(3,5)P2, PtdIns(4,5)P2 and PtdIns(3,4,5)P2. C-terminal fragments could be released during apoptosis via caspase-3-dependent cleavage.

Its subcellular location is the cell membrane. It localises to the nucleus. It is found in the cytoplasm. In terms of biological role, plays a role in the regulation of the actin cytoskeleton through its interactions with actin capping protein (CP). May function to target CK2 to the plasma membrane thereby serving as an adapter to facilitate the phosphorylation of CP by protein kinase 2 (CK2). Appears to target ATM to the plasma membrane. Appears to also inhibit tumor cell growth by inhibiting AKT-mediated cell-survival. Also implicated in PI3K-regulated muscle differentiation, the regulation of AP-1 activity (plasma membrane bound AP-1 regulator that translocates to the nucleus) and the promotion of apoptosis induced by tumor necrosis factor TNF. When bound to PKB, it inhibits it probably by decreasing PKB level of phosphorylation. The polypeptide is Pleckstrin homology domain-containing family O member 1 (Plekho1) (Mus musculus (Mouse)).